The following is a 170-amino-acid chain: Large ribosomal subunit protein uL5 (170 aa).

It belongs to the universal ribosomal protein uL5 family. In terms of assembly, part of the 50S ribosomal subunit; contacts the 5S rRNA and probably tRNA. Forms a bridge to the 30S subunit in the 70S ribosome.

Its function is as follows. This is one of the proteins that bind and probably mediate the attachment of the 5S RNA into the large ribosomal subunit, where it forms part of the central protuberance. In the 70S ribosome it contacts protein S13 of the 30S subunit (bridge B1b), connecting the 2 subunits; this bridge is implicated in subunit movement. May contact the P site tRNA; the 5S rRNA and some of its associated proteins might help stabilize positioning of ribosome-bound tRNAs. This chain is Large ribosomal subunit protein uL5, found in Thermoplasma acidophilum (strain ATCC 25905 / DSM 1728 / JCM 9062 / NBRC 15155 / AMRC-C165).